A 106-amino-acid polypeptide reads, in one-letter code: ATP-dependent Clp protease adapter protein ClpS (106 aa).

The interval 1-22 (MNEYHNSLKSKESVKDERQQKL) is disordered. Basic and acidic residues predominate over residues 9–20 (KSKESVKDERQQ).

This sequence belongs to the ClpS family. Binds to the N-terminal domain of the chaperone ClpA.

Functionally, involved in the modulation of the specificity of the ClpAP-mediated ATP-dependent protein degradation. This chain is ATP-dependent Clp protease adapter protein ClpS, found in Photorhabdus laumondii subsp. laumondii (strain DSM 15139 / CIP 105565 / TT01) (Photorhabdus luminescens subsp. laumondii).